We begin with the raw amino-acid sequence, 302 residues long: Bifunctional protein FolD (302 aa).

NADP(+) is bound by residues 165–167, serine 190, and isoleucine 231; that span reads GRS.

The protein belongs to the tetrahydrofolate dehydrogenase/cyclohydrolase family. Homodimer.

It carries out the reaction (6R)-5,10-methylene-5,6,7,8-tetrahydrofolate + NADP(+) = (6R)-5,10-methenyltetrahydrofolate + NADPH. It catalyses the reaction (6R)-5,10-methenyltetrahydrofolate + H2O = (6R)-10-formyltetrahydrofolate + H(+). It functions in the pathway one-carbon metabolism; tetrahydrofolate interconversion. In terms of biological role, catalyzes the oxidation of 5,10-methylenetetrahydrofolate to 5,10-methenyltetrahydrofolate and then the hydrolysis of 5,10-methenyltetrahydrofolate to 10-formyltetrahydrofolate. This Prochlorococcus marinus (strain MIT 9211) protein is Bifunctional protein FolD.